The sequence spans 180 residues: Protein SPMIP9 (180 aa).

As to quaternary structure, microtubule inner protein component of sperm flagellar doublet microtubules.

Its subcellular location is the nucleus. The protein resides in the cytoplasm. It localises to the cytoskeleton. The protein localises to the flagellum axoneme. Its function is as follows. Microtubule inner protein (MIP) part of the dynein-decorated doublet microtubules (DMTs) in flagella axoneme. This is Protein SPMIP9 (SPMIP9) from Bos taurus (Bovine).